A 473-amino-acid chain; its full sequence is 3-isopropylmalate dehydratase large subunit (473 aa).

Residues cysteine 354, cysteine 414, and cysteine 417 each coordinate [4Fe-4S] cluster.

It belongs to the aconitase/IPM isomerase family. LeuC type 1 subfamily. In terms of assembly, heterodimer of LeuC and LeuD. The cofactor is [4Fe-4S] cluster.

It catalyses the reaction (2R,3S)-3-isopropylmalate = (2S)-2-isopropylmalate. The protein operates within amino-acid biosynthesis; L-leucine biosynthesis; L-leucine from 3-methyl-2-oxobutanoate: step 2/4. Catalyzes the isomerization between 2-isopropylmalate and 3-isopropylmalate, via the formation of 2-isopropylmaleate. The polypeptide is 3-isopropylmalate dehydratase large subunit (Rhodopseudomonas palustris (strain BisB18)).